The following is a 79-amino-acid chain: D-alanyl carrier protein (79 aa).

Residues 1–77 (MDIKSEVIEI…KIIAGIVELQ (77 aa)) form the Carrier domain. At Ser35 the chain carries O-(pantetheine 4'-phosphoryl)serine.

The protein belongs to the DltC family. 4'-phosphopantetheine is transferred from CoA to a specific serine of apo-DCP.

The protein localises to the cytoplasm. The protein operates within cell wall biogenesis; lipoteichoic acid biosynthesis. Functionally, carrier protein involved in the D-alanylation of lipoteichoic acid (LTA). The loading of thioester-linked D-alanine onto DltC is catalyzed by D-alanine--D-alanyl carrier protein ligase DltA. The DltC-carried D-alanyl group is further transferred to cell membrane phosphatidylglycerol (PG) by forming an ester bond, probably catalyzed by DltD. D-alanylation of LTA plays an important role in modulating the properties of the cell wall in Gram-positive bacteria, influencing the net charge of the cell wall. This is D-alanyl carrier protein from Streptococcus pneumoniae serotype 2 (strain D39 / NCTC 7466).